Reading from the N-terminus, the 234-residue chain is Purine nucleoside phosphorylase DeoD-type (234 aa).

A purine D-ribonucleoside is bound at residue His-5. Residues Gly-21, Arg-25, Arg-44, and 88–91 (RVGT) contribute to the phosphate site. A purine D-ribonucleoside-binding positions include 178 to 180 (EME) and 202 to 203 (SD). Catalysis depends on Asp-203, which acts as the Proton donor.

Belongs to the PNP/UDP phosphorylase family. As to quaternary structure, homohexamer; trimer of homodimers.

It catalyses the reaction a purine D-ribonucleoside + phosphate = a purine nucleobase + alpha-D-ribose 1-phosphate. The enzyme catalyses a purine 2'-deoxy-D-ribonucleoside + phosphate = a purine nucleobase + 2-deoxy-alpha-D-ribose 1-phosphate. Its function is as follows. Catalyzes the reversible phosphorolytic breakdown of the N-glycosidic bond in the beta-(deoxy)ribonucleoside molecules, with the formation of the corresponding free purine bases and pentose-1-phosphate. The chain is Purine nucleoside phosphorylase DeoD-type from Lactococcus lactis subsp. lactis (strain IL1403) (Streptococcus lactis).